A 208-amino-acid polypeptide reads, in one-letter code: Small ribosomal subunit protein uS4 (208 aa).

In terms of domain architecture, S4 RNA-binding spans 98–158; it reads RRLDNIAYRL…EKSRKVACIN (61 aa).

This sequence belongs to the universal ribosomal protein uS4 family. As to quaternary structure, part of the 30S ribosomal subunit. Contacts protein S5. The interaction surface between S4 and S5 is involved in control of translational fidelity.

Functionally, one of the primary rRNA binding proteins, it binds directly to 16S rRNA where it nucleates assembly of the body of the 30S subunit. In terms of biological role, with S5 and S12 plays an important role in translational accuracy. This chain is Small ribosomal subunit protein uS4, found in Geotalea uraniireducens (strain Rf4) (Geobacter uraniireducens).